Reading from the N-terminus, the 1004-residue chain is NACHT, LRR and PYD domains-containing protein 9C (1004 aa).

The 92-residue stretch at 1 to 92 folds into the Pyrin domain; the sequence is MVDSSSYGLL…TMAQIERRDK (92 aa). Residues 143–465 form the NACHT domain; sequence ATAVVLGTRG…KQDKDTYHPV (323 aa). Position 149-156 (149-156) interacts with ATP; sequence GTRGKGKT. LRR repeat units lie at residues 750 to 770, 779 to 800, 807 to 828, 836 to 857, and 864 to 884; these read KVKH…MFLC, VLES…HLYE, HLSL…LLCE, TLKE…EISA, and NLKT…KRLC.

Belongs to the NLRP family. As to expression, oocyte specific.

It is found in the cytoplasm. Functionally, may be involved in inflammation. The chain is NACHT, LRR and PYD domains-containing protein 9C (Nlrp9c) from Mus musculus (Mouse).